The sequence spans 365 residues: Eukaryotic translation initiation factor 3 subunit H (365 aa).

The MPN domain maps to 15-166; it reads ILLDSLVVMK…IRAWRLSTAA (152 aa). Positions 276–295 are disordered; that stretch reads KRQQENESRLARGDPPLPMD. Positions 277–287 are enriched in basic and acidic residues; that stretch reads RQQENESRLAR.

The protein belongs to the eIF-3 subunit H family. Component of the eukaryotic translation initiation factor 3 (eIF-3) complex.

The protein resides in the cytoplasm. Component of the eukaryotic translation initiation factor 3 (eIF-3) complex, which is involved in protein synthesis of a specialized repertoire of mRNAs and, together with other initiation factors, stimulates binding of mRNA and methionyl-tRNAi to the 40S ribosome. The eIF-3 complex specifically targets and initiates translation of a subset of mRNAs involved in cell proliferation. The polypeptide is Eukaryotic translation initiation factor 3 subunit H (Caenorhabditis briggsae).